We begin with the raw amino-acid sequence, 234 residues long: Small ribosomal subunit protein uS3 (234 aa).

The KH type-2 domain maps to 39-107 (IRKFLKKELY…EVSINIKEVK (69 aa)).

Belongs to the universal ribosomal protein uS3 family. As to quaternary structure, part of the 30S ribosomal subunit. Forms a tight complex with proteins S10 and S14.

In terms of biological role, binds the lower part of the 30S subunit head. Binds mRNA in the 70S ribosome, positioning it for translation. This chain is Small ribosomal subunit protein uS3, found in Helicobacter pylori (strain J99 / ATCC 700824) (Campylobacter pylori J99).